A 442-amino-acid polypeptide reads, in one-letter code: Small RNA 2'-O-methyltransferase (442 aa).

Residues Gly125 and Asp151 each contribute to the S-adenosyl-L-methionine site. The Mg(2+) site is built by Glu209, Glu212, His213, and His260.

The protein belongs to the methyltransferase superfamily. HEN1 family. The cofactor is Mg(2+). Broadly expressed in the germline and somatic tissues in both hermaphrodites and males.

It is found in the cytoplasm. It localises to the nucleus. Its subcellular location is the nucleoplasm. The protein resides in the cytoplasmic granule. It catalyses the reaction small RNA 3'-end nucleotide + S-adenosyl-L-methionine = small RNA 3'-end 2'-O-methylnucleotide + S-adenosyl-L-homocysteine + H(+). In terms of biological role, methyltransferase that adds a 2'-O-methyl group at the 3'-end of PIWI-interacting RNAs (piRNAs) and small interfering RNAs (siRNAs) which are classes of regulatory RNAs that are involved in gene silencing in endogenous RNA interference (RNAi) pathways. Methylation protects the 3'-end of small RNAs from tailing and trimming and could constitute a recognition signal for appropriate argonaute machineries. Methylates and stabilizes 26G-siRNAs (a class of 26 nucleotide siRNAs that possess a monophosphorylated guanine residue at the 5'-end) when they are bound by argonaute protein ergo-1. This occurs in the female germline and embryo, but not in the male germline. Does not methylate 26G-siRNAs bound by argonaute proteins alg-3 or alg-4. Methylates and stabilizes 21U-piRNAs, which are a class of 21 nucleotide piRNAs that possess a uracil residue at the 5'-end, in the male and female germline. In addition, may play a role in exogenous RNAi (exoRNAi) pathways in the germline. This chain is Small RNA 2'-O-methyltransferase, found in Caenorhabditis elegans.